The chain runs to 507 residues: UDP-N-acetylhexosamine pyrophosphorylase-like protein 1 (507 aa).

The disordered stretch occupies residues 56 to 91 (ACARPHGPPPDLAARLRPLPPERVGRASRSDPETRR). Residues 78–91 (RVGRASRSDPETRR) show a composition bias toward basic and acidic residues. The Substrate binding signature appears at 111–114 (LAGG). UTP is bound by residues 111–114 (LAGG), K125, Q199, and G225. N226 is a binding site for substrate. D256 lines the UTP pocket. Positions 306 to 307 (EY) match the Substrate binding motif. K380 contacts UTP. K410 is a binding site for substrate.

The protein belongs to the UDPGP type 1 family.

The chain is UDP-N-acetylhexosamine pyrophosphorylase-like protein 1 (UAP1L1) from Homo sapiens (Human).